The sequence spans 216 residues: Eukaryotic translation initiation factor 3 subunit K (216 aa).

A PCI domain is found at 40–202 (YDLDANLAVL…HIKSKNIAEK (163 aa)).

This sequence belongs to the eIF-3 subunit K family. As to quaternary structure, component of the eukaryotic translation initiation factor 3 (eIF-3) complex.

The protein localises to the cytoplasm. Functionally, component of the eukaryotic translation initiation factor 3 (eIF-3) complex, which is involved in protein synthesis of a specialized repertoire of mRNAs and, together with other initiation factors, stimulates binding of mRNA and methionyl-tRNAi to the 40S ribosome. The eIF-3 complex specifically targets and initiates translation of a subset of mRNAs involved in cell proliferation. This Nematostella vectensis (Starlet sea anemone) protein is Eukaryotic translation initiation factor 3 subunit K.